Consider the following 221-residue polypeptide: Long-tail fiber protein gp36 (221 aa).

It belongs to the tevenvirinae tail fiber protein p36 family. The long-tail fibers are trimeric, with a stoichiometry of gp34/gp37/gp36/gp35 of 3:3:3:1.

Its subcellular location is the virion. In terms of biological role, structural component of the distal-half of the long-tail fiber. The long-tail fiber of T4 is about 1600 Angstroms long with a kink in the middle that divides the fiber into proximal and distal halves. The thin tip of the distal half-fiber interacts with the bacterial lipopolysaccharide receptor and specifies the host range of the phage. The protein is Long-tail fiber protein gp36 (36) of Escherichia coli (Bacteriophage T4).